The primary structure comprises 492 residues: Glutamyl-tRNA(Gln) amidotransferase subunit A (492 aa).

Catalysis depends on charge relay system residues lysine 79 and serine 154. Serine 178 (acyl-ester intermediate) is an active-site residue.

This sequence belongs to the amidase family. GatA subfamily. In terms of assembly, heterotrimer of A, B and C subunits.

The enzyme catalyses L-glutamyl-tRNA(Gln) + L-glutamine + ATP + H2O = L-glutaminyl-tRNA(Gln) + L-glutamate + ADP + phosphate + H(+). Allows the formation of correctly charged Gln-tRNA(Gln) through the transamidation of misacylated Glu-tRNA(Gln) in organisms which lack glutaminyl-tRNA synthetase. The reaction takes place in the presence of glutamine and ATP through an activated gamma-phospho-Glu-tRNA(Gln). The polypeptide is Glutamyl-tRNA(Gln) amidotransferase subunit A (Acinetobacter baumannii (strain ACICU)).